Here is a 23-residue protein sequence, read N- to C-terminus: Keratin (23 aa).

One can recognise an IF rod domain in the interval tyrosine 1–arginine 23. The coil 2 stretch occupies residues tyrosine 1–arginine 23.

It belongs to the intermediate filament family.

In Cervus elaphus (Red deer), this protein is Keratin.